A 626-amino-acid polypeptide reads, in one-letter code: Carnitine O-acetyltransferase (626 aa).

Lysine 93 is subject to N6-succinyllysine. The residue at position 261 (lysine 261) is an N6-acetyllysine; alternate. Lysine 261 carries the N6-succinyllysine; alternate modification. Position 268 is an N6-acetyllysine (lysine 268). Histidine 343 serves as the catalytic Proton acceptor. Residues lysine 419 and 423 to 430 (KSEKLSPD) each bind CoA. Residues tyrosine 452 and serine 454 each coordinate (R)-carnitine. Position 456 (serine 456) interacts with CoA. Residue threonine 465 participates in (R)-carnitine binding. 2 residues coordinate CoA: arginine 504 and glutamine 555. The Microbody targeting signal signature appears at 624–626 (AKL).

Belongs to the carnitine/choline acetyltransferase family. As to quaternary structure, monomer.

The protein resides in the endoplasmic reticulum. The protein localises to the peroxisome. It localises to the mitochondrion inner membrane. The catalysed reaction is (R)-carnitine + acetyl-CoA = O-acetyl-(R)-carnitine + CoA. It carries out the reaction propanoyl-CoA + (R)-carnitine = O-propanoyl-(R)-carnitine + CoA. The enzyme catalyses butanoyl-CoA + (R)-carnitine = O-butanoyl-(R)-carnitine + CoA. It catalyses the reaction hexanoyl-CoA + (R)-carnitine = O-hexanoyl-(R)-carnitine + CoA. The catalysed reaction is octanoyl-CoA + (R)-carnitine = O-octanoyl-(R)-carnitine + CoA. It carries out the reaction decanoyl-CoA + (R)-carnitine = O-decanoyl-(R)-carnitine + CoA. The enzyme catalyses 3-methylbutanoyl-CoA + (R)-carnitine = O-3-methylbutanoyl-(R)-carnitine + CoA. It catalyses the reaction 2-methylpropanoyl-CoA + (R)-carnitine = O-isobutanoyl-(R)-carnitine + CoA. The catalysed reaction is 2-methylbutanoyl-CoA + (R)-carnitine = O-2-methylbutanoyl-(R)-carnitine + CoA. It carries out the reaction acetoacetyl-CoA + (R)-carnitine = O-3-oxobutanoyl-(R)-carnitine + CoA. The enzyme catalyses 3-hydroxybutanoyl-CoA + (R)-carnitine = O-3-hydroxybutanoyl-(R)-carnitine + CoA. It catalyses the reaction 4,8-dimethylnonanoyl-CoA + (R)-carnitine = O-4,8-dimethylnonanoyl-(R)-carnitine + CoA. The catalysed reaction is 2,6-dimethylheptanoyl-CoA + (R)-carnitine = O-2,6-dimethylheptanoyl-(R)-carnitine + CoA. Functionally, catalyzes the reversible transfer of acyl groups from carnitine to coenzyme A (CoA) and regulates the acyl-CoA/CoA ratio. Also plays a crucial role in the transport of fatty acids for beta-oxidation. Responsible for the synthesis of short- and branched-chain acylcarnitines. Active towards some branched-chain amino acid oxidation pathway (BCAAO) intermediates. Trans-2-enoyl-CoAs and 2-methylacyl-CoAs are poor substrates. The chain is Carnitine O-acetyltransferase from Mus musculus (Mouse).